Here is a 555-residue protein sequence, read N- to C-terminus: Urocanate hydratase (555 aa).

Residues 52-53 (GG), glutamine 130, 176-178 (GMG), glutamate 196, arginine 201, 242-243 (NA), 263-267 (QTSAH), 273-274 (YL), and tyrosine 322 each bind NAD(+). The active site involves cysteine 410. Glycine 492 is an NAD(+) binding site.

Belongs to the urocanase family. The cofactor is NAD(+).

The protein localises to the cytoplasm. It catalyses the reaction 4-imidazolone-5-propanoate = trans-urocanate + H2O. The protein operates within amino-acid degradation; L-histidine degradation into L-glutamate; N-formimidoyl-L-glutamate from L-histidine: step 2/3. In terms of biological role, catalyzes the conversion of urocanate to 4-imidazolone-5-propionate. This chain is Urocanate hydratase, found in Shewanella baltica (strain OS195).